A 491-amino-acid polypeptide reads, in one-letter code: Acetylcholine receptor subunit epsilon (491 aa).

Residues 1–20 form the signal peptide; it reads MAGALLCALLLLQLLGRGEG. Residues 21–239 are Extracellular-facing; the sequence is KNEELRLYHY…VIYSLIIRRK (219 aa). N-linked (GlcNAc...) asparagine glycans are attached at residues Asn-86 and Asn-161. The cysteines at positions 148 and 162 are disulfide-linked. A helical membrane pass occupies residues 240–264; sequence PLFYVINIIVPCVLISGLVLLAYFL. The Cytoplasmic portion of the chain corresponds to 265 to 272; sequence PAQAGGQK. Residues 273 to 291 form a helical membrane-spanning segment; sequence CTVSINVLLAQTVFLFLIA. Residues 292–306 are Extracellular-facing; it reads QKTPETSLSVPLLGR. Residues 307–328 traverse the membrane as a helical segment; the sequence is YLIFVMVVATLIVMNCVIVLNV. The Cytoplasmic segment spans residues 329–456; the sequence is SLRTPTTHAM…WVRMGKALDS (128 aa). Residues 457 to 480 traverse the membrane as a helical segment; sequence ICFWAALVLFLVGSSLIFLGAYFN. Topologically, residues 481-491 are extracellular; the sequence is RVPQLPYPPCM.

It belongs to the ligand-gated ion channel (TC 1.A.9) family. Acetylcholine receptor (TC 1.A.9.1) subfamily. Epsilon/CHRNE sub-subfamily.

The protein resides in the postsynaptic cell membrane. Its subcellular location is the cell membrane. It carries out the reaction K(+)(in) = K(+)(out). It catalyses the reaction Na(+)(in) = Na(+)(out). Functionally, after binding acetylcholine, the AChR responds by an extensive change in conformation that affects all subunits and leads to opening of an ion-conducting channel across the plasma membrane. This Bos taurus (Bovine) protein is Acetylcholine receptor subunit epsilon (CHRNE).